The following is a 791-amino-acid chain: Subtilisin-like protease SBT5.6 (791 aa).

The first 20 residues, 1–20, serve as a signal peptide directing secretion; it reads MKKLTSLFPLLFLIPLLASC. Positions 21 to 108 are cleaved as a propeptide — activation peptide; sequence AEEKQVYIVY…KSHPRKYEAH (88 aa). The 79-residue stretch at 26–104 folds into the Inhibitor I9 domain; it reads VYIVYFGEHK…VSVFKSHPRK (79 aa). The Peptidase S8 domain occupies 134 to 645; the sequence is ADDRFRVGRN…SGHFRPTKAA (512 aa). The active-site Charge relay system is the D160. Residues N193 and N219 are each glycosylated (N-linked (GlcNAc...) asparagine). The Charge relay system role is filled by H235. One can recognise a PA domain in the interval 400-494; sequence FAPLVYASNV…VTPTVVDKIL (95 aa). N-linked (GlcNAc...) asparagine glycosylation is present at N417. S578 acts as the Charge relay system in catalysis. N-linked (GlcNAc...) asparagine glycosylation is found at N666, N713, and N761.

This sequence belongs to the peptidase S8 family.

The protein localises to the secreted. The polypeptide is Subtilisin-like protease SBT5.6 (Arabidopsis thaliana (Mouse-ear cress)).